Consider the following 609-residue polypeptide: Proteasome-associated ATPase (609 aa).

The tract at residues 1–24 (MGESERSEAFGIPRDSPLSSGDAA) is disordered. Positions 20–96 (SGDAAELEQL…LREEVDRLGQ (77 aa)) form a coiled coil. 296-301 (GCGKTL) is an ATP binding site. The segment at 608-609 (YL) is docks into pockets in the proteasome alpha-ring.

The protein belongs to the AAA ATPase family. Homohexamer. Assembles into a hexameric ring structure that caps the 20S proteasome core. Strongly interacts with the prokaryotic ubiquitin-like protein Pup through a hydrophobic interface; the interacting region of ARC lies in its N-terminal coiled-coil domain. There is one Pup binding site per ARC hexamer ring. Upon ATP-binding, the C-terminus of ARC interacts with the alpha-rings of the proteasome core, possibly by binding to the intersubunit pockets.

The protein operates within protein degradation; proteasomal Pup-dependent pathway. In terms of biological role, ATPase which is responsible for recognizing, binding, unfolding and translocation of pupylated proteins into the bacterial 20S proteasome core particle. May be essential for opening the gate of the 20S proteasome via an interaction with its C-terminus, thereby allowing substrate entry and access to the site of proteolysis. Thus, the C-termini of the proteasomal ATPase may function like a 'key in a lock' to induce gate opening and therefore regulate proteolysis. In Mycobacterium bovis (strain BCG / Pasteur 1173P2), this protein is Proteasome-associated ATPase.